We begin with the raw amino-acid sequence, 180 residues long: MTSSVELAQTKPLFRVLLLKGFVFYVVAFETEEESSEAELPLVYLHDFELNINKRGKIEASYVDFMSCMTRLKPSSVSYTRVSSEKSSEDFSLPGSGKTFGSKVLNRKVTFTFENGVQLVFGMYGLEQRCVSSDYLWFENVFVGAHCGTLTYCLNCELDKSGGELEILTFSKNEVLLKRW.

Interacts with Hsp70h.

It localises to the virion. Its function is as follows. Involved in systemic transport. Necessary for long-distance transport of the virus through the phloem. The sequence is that of 20 kDa protein from Beet yellows virus (isolate Ukraine) (BYV).